A 211-amino-acid chain; its full sequence is MRVRKRKGAEEHLENHPEYVIMNPEDIKGHWKEVFGNDHPIHIEVGSGKGGFITGKALQNPEINYIGIDIQLSVLSYALDKVLESNAPNVKLLRVDGSSLTNYFENGEIDLLYLNFSDPWPKTKHEKRRLTYKDFLETYKQILPEHGEIHFKTDNRGLFEYSLASFSQFGMTLKQVWLDLHASDFEGNVMTEYEEKFSKKGQVIYRVEAFF.

Residues glutamate 44, aspartate 69, aspartate 96, and aspartate 118 each coordinate S-adenosyl-L-methionine. The active site involves aspartate 118. Substrate is bound at residue lysine 122. The segment at 124-129 (KHEKRR) is interaction with RNA. Substrate contacts are provided by residues aspartate 154 and 191–194 (TEYE).

This sequence belongs to the class I-like SAM-binding methyltransferase superfamily. TrmB family.

The enzyme catalyses guanosine(46) in tRNA + S-adenosyl-L-methionine = N(7)-methylguanosine(46) in tRNA + S-adenosyl-L-homocysteine. It functions in the pathway tRNA modification; N(7)-methylguanine-tRNA biosynthesis. Functionally, catalyzes the formation of N(7)-methylguanine at position 46 (m7G46) in tRNA. In Streptococcus uberis (strain ATCC BAA-854 / 0140J), this protein is tRNA (guanine-N(7)-)-methyltransferase.